The chain runs to 788 residues: Bifunctional purine biosynthetic protein ADE1 (788 aa).

The GARS stretch occupies residues 1–430 (MEPIIALLIG…DIAHHALNPK (430 aa)). An ATP-grasp domain is found at 115 to 321 (KDFMHRNNIP…LAEIILACVN (207 aa)). 141–202 (LDTCTFDVVI…EELLEGEELS (62 aa)) provides a ligand contact to ATP. The Mg(2+) site is built by glutamate 291 and asparagine 293. An AIRS region spans residues 437 to 769 (LTYENSGVSV…TVYRIGQLVD (333 aa)).

This sequence in the N-terminal section; belongs to the GARS family. In the C-terminal section; belongs to the AIR synthase family. Mg(2+) serves as cofactor. Requires Mn(2+) as cofactor.

It is found in the cytoplasm. The protein resides in the cytosol. The catalysed reaction is 5-phospho-beta-D-ribosylamine + glycine + ATP = N(1)-(5-phospho-beta-D-ribosyl)glycinamide + ADP + phosphate + H(+). It catalyses the reaction 2-formamido-N(1)-(5-O-phospho-beta-D-ribosyl)acetamidine + ATP = 5-amino-1-(5-phospho-beta-D-ribosyl)imidazole + ADP + phosphate + H(+). The protein operates within purine metabolism; IMP biosynthesis via de novo pathway; 5-amino-1-(5-phospho-D-ribosyl)imidazole from N(2)-formyl-N(1)-(5-phospho-D-ribosyl)glycinamide: step 2/2. It participates in purine metabolism; IMP biosynthesis via de novo pathway; N(1)-(5-phospho-D-ribosyl)glycinamide from 5-phospho-alpha-D-ribose 1-diphosphate: step 2/2. In terms of biological role, catalyzes the second and fifth step in the 'de novo' purine biosynthesis pathway; contains phosphoribosylamine--glycine ligase (GARS) and phosphoribosylformylglycinamidine cyclo-ligase (AIRS) activities. The chain is Bifunctional purine biosynthetic protein ADE1 from Schizosaccharomyces pombe (strain 972 / ATCC 24843) (Fission yeast).